A 352-amino-acid polypeptide reads, in one-letter code: fMet-Leu-Phe receptor (352 aa).

Over 1–27 the chain is Extracellular; it reads MDSNASLPLNVSGGTQATPAGLVVLDV. Asn4 and Asn10 each carry an N-linked (GlcNAc...) asparagine glycan. Residues 28 to 50 traverse the membrane as a helical segment; the sequence is FSYLILVVTFVLGVLGNGLVIWV. Residues 51–61 are Cytoplasmic-facing; that stretch reads TGFRMTHTVTT. The chain crosses the membrane as a helical span at residues 62–83; it reads ISYLNLALADFSFTSTLPFFIV. At 84–100 the chain is on the extracellular side; sequence TKALGGHWPFGWFLCKF. Cys98 and Cys178 are joined by a disulfide. The helical transmembrane segment at 101-121 threads the bilayer; the sequence is VFTIVDINLFGSVFLIALIAL. Over 122–140 the chain is Cytoplasmic; the sequence is DRCICVLHPVWAQNHRNVS. A helical transmembrane segment spans residues 141-162; sequence LAKKVIVGPWICALLLTLPVII. Topologically, residues 163-207 are extracellular; the sequence is RVTTLSHPRAPGKMACTFDWSPWTEDPAEKLKVAISMFMVRGIIR. A helical membrane pass occupies residues 208 to 228; it reads FIIGFSTPMSIVAVCYGLIAT. Over 229 to 244 the chain is Cytoplasmic; the sequence is KIHRQGLIKSSRPLRV. A helical membrane pass occupies residues 245–268; it reads LSFVVASFLLCWSPYQIAALIATV. The Extracellular segment spans residues 269–287; that stretch reads RIRELLLGMGKDLRIVLDV. The chain crosses the membrane as a helical span at residues 288–307; it reads TSFVAFFNSCLNPMLYVFMG. Residues 308–352 are Cytoplasmic-facing; sequence QDFRERLIHSLPASLERALSEDSAQTSDTGTNSTSAPAEAELQAI.

This sequence belongs to the G-protein coupled receptor 1 family. Phosphorylated; which is necessary for desensitization. Neutrophils.

The protein resides in the cell membrane. In terms of biological role, high affinity receptor for N-formyl-methionyl peptides (fMLP), which are powerful neutrophil chemotactic factors. Binding of fMLP to the receptor stimulates intracellular calcium mobilization and superoxide anion release. This response is mediated via a G-protein that activates a phosphatidylinositol-calcium second messenger system. Receptor for TAFA4, mediates its effects on chemoattracting macrophages, promoting phagocytosis and increasing ROS release. Receptor for cathepsin CTSG, leading to increased phagocyte chemotaxis. This chain is fMet-Leu-Phe receptor (FPR1), found in Oryctolagus cuniculus (Rabbit).